A 517-amino-acid chain; its full sequence is Salicyloyl-CoA 5-hydroxylase (517 aa).

It belongs to the aromatic-ring hydroxylase family. KMO subfamily.

The catalysed reaction is 2-hydroxybenzoyl-CoA + NADH + O2 + H(+) = 2,5-dihydroxybenzoyl-CoA + NAD(+) + H2O. Involved in the degradation of salicylate via a pathway involving coenzyme A derivative. Catalyzes the aromatic hydroxylation of salicylyl-CoA to yield gentisyl-CoA. This is Salicyloyl-CoA 5-hydroxylase from Streptomyces sp.